We begin with the raw amino-acid sequence, 225 residues long: Ribonuclease 3 (225 aa).

An RNase III domain is found at 5–127 (IEKLTRQLGY…IIGAVYLDSD (123 aa)). Glutamate 40 lines the Mg(2+) pocket. The active site involves aspartate 44. Positions 113 and 116 each coordinate Mg(2+). Residue glutamate 116 is part of the active site. In terms of domain architecture, DRBM spans 154–224 (DPKTRLQEFL…AELALEQLTN (71 aa)).

It belongs to the ribonuclease III family. Homodimer. Mg(2+) is required as a cofactor.

It is found in the cytoplasm. The catalysed reaction is Endonucleolytic cleavage to 5'-phosphomonoester.. Functionally, digests double-stranded RNA. Involved in the processing of primary rRNA transcript to yield the immediate precursors to the large and small rRNAs (23S and 16S). Processes some mRNAs, and tRNAs when they are encoded in the rRNA operon. Processes pre-crRNA and tracrRNA of type II CRISPR loci if present in the organism. The polypeptide is Ribonuclease 3 (Vibrio vulnificus (strain YJ016)).